The following is a 189-amino-acid chain: Putative zinc finger protein ORF189 (189 aa).

The C2H2-type zinc finger occupies 114–137 (YVCPYCVSRFPTVRALKIHLKRRH).

This Acidianus two-tailed virus (ATV) protein is Putative zinc finger protein ORF189.